The primary structure comprises 473 residues: Ribosomal RNA small subunit methyltransferase F (473 aa).

Residues 123-129 (AAAPGSK), Glu-147, Asp-174, and Asp-192 contribute to the S-adenosyl-L-methionine site. Cys-245 functions as the Nucleophile in the catalytic mechanism.

Belongs to the class I-like SAM-binding methyltransferase superfamily. RsmB/NOP family.

The protein resides in the cytoplasm. It carries out the reaction cytidine(1407) in 16S rRNA + S-adenosyl-L-methionine = 5-methylcytidine(1407) in 16S rRNA + S-adenosyl-L-homocysteine + H(+). Functionally, specifically methylates the cytosine at position 1407 (m5C1407) of 16S rRNA. In Vibrio atlanticus (strain LGP32) (Vibrio splendidus (strain Mel32)), this protein is Ribosomal RNA small subunit methyltransferase F.